Consider the following 597-residue polypeptide: MSSGYSSAPSVSHTSSEADLNRIESYEDGVDEEASDEQRMCGLSELVTSCLTSSKSSRQKDSFEDDDDVPIEIVGTLKKSKSKKKKQCPPNITIEKKNGNSSPFLKSSQFTDVPPTIRFYTKGTKVTKPARKIQSRLTWCHNSLLPIVMRQTLSASHFTIVDESLFHIGYWGRHLKSAQYKALQPHQKVNHFPGAFHIGRKDRLWMHIRNRLEHFGEEFEIMPFTYILPTDRQELLKYLETDVNRHVIIKPPASARGSGITVTRKPKDFPTTATLVAQHYIERPLTINRAKFDLRLYAYVPTFEPLRVYIYDQGLVRFASVPYNPSVTNISNKYMHLTNYSINKLAEADGIANKPVPKWALHQLWDYFDQMGVNSQKIQKEIEDVIVKAFISCEKPIREHMSRFLEQEFICYELFGIDIILDEDYKPWLLEVNISPSLHSGTSLDVSVKAPLAKDVLNLAGIHVPPSFDKLHTADYSCRPRNGTKTREQLVKEASWVAAYRDQHGAIDNRIFKRLTPEDTRALVEFEDELDRIGDFKLVFPTAQTAHYQKFFAEPIYMNILLQQWQIAQEGDRSIGIDRLEQLCRQKHMQSDQEISF.

A compositionally biased stretch (polar residues) spans 1–18 (MSSGYSSAPSVSHTSSEA). 2 disordered regions span residues 1–39 (MSSG…DEQR) and 80–107 (SKSK…FLKS). Residues 26-35 (YEDGVDEEAS) show a composition bias toward acidic residues. The TTL domain occupies 134-472 (QSRLTWCHNS…HVPPSFDKLH (339 aa)). Residues lysine 250, 256–257 (RG), 278–281 (QHYI), and 291–293 (KFD) contribute to the ATP site. An a protein-binding site is contributed by arginine 256. An L-glutamate-binding site is contributed by arginine 317. Residue 338 to 339 (TN) participates in ATP binding. L-glutamate contacts are provided by tyrosine 340, serine 341, and lysine 358. The Mg(2+) site is built by aspartate 418, glutamate 431, and asparagine 433. Position 449 (lysine 449) interacts with L-glutamate.

Belongs to the tubulin--tyrosine ligase family. Requires Mg(2+) as cofactor.

It carries out the reaction L-glutamyl-[protein] + L-glutamate + ATP = gamma-L-glutamyl-L-glutamyl-[protein] + ADP + phosphate + H(+). In terms of biological role, monoglutamylase which modifies tubulin, adding a single glutamate on the gamma-carboxyl group of specific glutamate residues of target proteins. Involved in the side-chain initiation step of the polyglutamylation reaction but not in the elongation step. Preferentially modifies beta-tail tubulin over the alpha-tubulin. Involved in side-chain glutamylation of tubulin in sensory cilia. Together with ttll-5 and ttll-11, required for male mating. This chain is Tubulin polyglutamylase ttll-4 (ttll-4), found in Caenorhabditis briggsae.